A 260-amino-acid chain; its full sequence is DNA repair protein RecO (260 aa).

It belongs to the RecO family.

Involved in DNA repair and RecF pathway recombination. This Paracidovorax citrulli (strain AAC00-1) (Acidovorax citrulli) protein is DNA repair protein RecO.